A 263-amino-acid polypeptide reads, in one-letter code: Proliferating cell nuclear antigen (263 aa).

The DNA-binding element occupies 61–80; sequence RCDRNLSMGMNLNNMAKMLR.

The protein belongs to the PCNA family.

The protein resides in the nucleus. In terms of biological role, this protein is an auxiliary protein of DNA polymerase delta and is involved in the control of eukaryotic DNA replication by increasing the polymerase's processibility during elongation of the leading strand. The protein is Proliferating cell nuclear antigen (PCNA) of Zea mays (Maize).